A 200-amino-acid chain; its full sequence is Holliday junction resolvase RecU (200 aa).

Residues Thr-85, Asp-87, Glu-100, and Gln-119 each coordinate Mg(2+).

Belongs to the RecU family. The cofactor is Mg(2+).

It localises to the cytoplasm. The catalysed reaction is Endonucleolytic cleavage at a junction such as a reciprocal single-stranded crossover between two homologous DNA duplexes (Holliday junction).. Functionally, endonuclease that resolves Holliday junction intermediates in genetic recombination. Cleaves mobile four-strand junctions by introducing symmetrical nicks in paired strands. Promotes annealing of linear ssDNA with homologous dsDNA. Required for DNA repair, homologous recombination and chromosome segregation. This chain is Holliday junction resolvase RecU, found in Bacillus cytotoxicus (strain DSM 22905 / CIP 110041 / 391-98 / NVH 391-98).